A 238-amino-acid chain; its full sequence is 6-phosphogluconolactonase (238 aa).

Belongs to the glucosamine/galactosamine-6-phosphate isomerase family. 6-phosphogluconolactonase subfamily.

The catalysed reaction is 6-phospho-D-glucono-1,5-lactone + H2O = 6-phospho-D-gluconate + H(+). Its pathway is carbohydrate degradation; pentose phosphate pathway; D-ribulose 5-phosphate from D-glucose 6-phosphate (oxidative stage): step 2/3. Functionally, hydrolysis of 6-phosphogluconolactone to 6-phosphogluconate. In Mesorhizobium japonicum (strain LMG 29417 / CECT 9101 / MAFF 303099) (Mesorhizobium loti (strain MAFF 303099)), this protein is 6-phosphogluconolactonase (pgl).